A 218-amino-acid chain; its full sequence is Uracil-DNA glycosylase (218 aa).

Asp-68 serves as the catalytic Proton acceptor.

It belongs to the uracil-DNA glycosylase (UDG) superfamily. UNG family. In terms of assembly, homodimer. Interacts with protein OPG148. Component of the Uracil-DNA glycosylase(UDG)-OPG148-polymerase complex; OPG148 and UDG form a heterodimeric processivity factor that associates with OPG71 to form the processive polymerase holoenzyme.

The enzyme catalyses Hydrolyzes single-stranded DNA or mismatched double-stranded DNA and polynucleotides, releasing free uracil.. Plays an essential role in viral replication as a component of the DNA polymerase processivity factor. Excises uracil residues from the DNA which can arise as a result of misincorporation of dUMP residues by DNA polymerase or due to deamination of cytosine. The protein is Uracil-DNA glycosylase (OPG116) of Variola virus.